A 370-amino-acid chain; its full sequence is Dual-specificity RNA methyltransferase RlmN (370 aa).

E93 acts as the Proton acceptor in catalysis. In terms of domain architecture, Radical SAM core spans 99–337; that stretch reads EEGRGTLCVS…VTTVRKTRGD (239 aa). C106 and C343 are oxidised to a cystine. The [4Fe-4S] cluster site is built by C113, C117, and C120. S-adenosyl-L-methionine is bound by residues 167–168, S199, 221–223, and N300; these read GE and SLH. The active-site S-methylcysteine intermediate is the C343.

The protein belongs to the radical SAM superfamily. RlmN family. Requires [4Fe-4S] cluster as cofactor.

The protein resides in the cytoplasm. It carries out the reaction adenosine(2503) in 23S rRNA + 2 reduced [2Fe-2S]-[ferredoxin] + 2 S-adenosyl-L-methionine = 2-methyladenosine(2503) in 23S rRNA + 5'-deoxyadenosine + L-methionine + 2 oxidized [2Fe-2S]-[ferredoxin] + S-adenosyl-L-homocysteine. It catalyses the reaction adenosine(37) in tRNA + 2 reduced [2Fe-2S]-[ferredoxin] + 2 S-adenosyl-L-methionine = 2-methyladenosine(37) in tRNA + 5'-deoxyadenosine + L-methionine + 2 oxidized [2Fe-2S]-[ferredoxin] + S-adenosyl-L-homocysteine. Functionally, specifically methylates position 2 of adenine 2503 in 23S rRNA and position 2 of adenine 37 in tRNAs. m2A2503 modification seems to play a crucial role in the proofreading step occurring at the peptidyl transferase center and thus would serve to optimize ribosomal fidelity. The polypeptide is Dual-specificity RNA methyltransferase RlmN (Francisella philomiragia subsp. philomiragia (strain ATCC 25017 / CCUG 19701 / FSC 153 / O#319-036)).